A 152-amino-acid chain; its full sequence is Leptin (152 aa).

The N-terminal stretch at 1–26 (MDHILALVLALLPLSLCVALPGALDA) is a signal peptide. Cys-109 and Cys-152 are oxidised to a cystine.

The protein belongs to the leptin family. As to expression, expressed mostly in the liver.

The protein resides in the secreted. May function as part of a signaling pathway that acts to regulate the size of the body fat depot. The protein is Leptin (lep) of Takifugu rubripes (Japanese pufferfish).